Here is a 169-residue protein sequence, read N- to C-terminus: Probable chemoreceptor glutamine deamidase CheD (169 aa).

It belongs to the CheD family.

It catalyses the reaction L-glutaminyl-[protein] + H2O = L-glutamyl-[protein] + NH4(+). Functionally, probably deamidates glutamine residues to glutamate on methyl-accepting chemotaxis receptors (MCPs), playing an important role in chemotaxis. The chain is Probable chemoreceptor glutamine deamidase CheD from Solibacter usitatus (strain Ellin6076).